The chain runs to 460 residues: GTPase Der (460 aa).

EngA-type G domains lie at 3–167 and 189–364; these read FTIA…PEPT and IRVA…AIWN. Residues 9–16, 56–60, 119–122, 195–202, 242–246, and 307–310 each bind GTP; these read GRPNVGKS, DTAGL, NKSE, GRPNAGKS, and NKWD. A KH-like domain is found at 365–449; the sequence is RRVPTAALNR…PIRITLREKA (85 aa).

Belongs to the TRAFAC class TrmE-Era-EngA-EngB-Septin-like GTPase superfamily. EngA (Der) GTPase family. In terms of assembly, associates with the 50S ribosomal subunit.

Its function is as follows. GTPase that plays an essential role in the late steps of ribosome biogenesis. In Nitrobacter hamburgensis (strain DSM 10229 / NCIMB 13809 / X14), this protein is GTPase Der.